We begin with the raw amino-acid sequence, 96 residues long: Co-chaperonin GroES (96 aa).

This sequence belongs to the GroES chaperonin family. In terms of assembly, heptamer of 7 subunits arranged in a ring. Interacts with the chaperonin GroEL.

It is found in the cytoplasm. Its function is as follows. Together with the chaperonin GroEL, plays an essential role in assisting protein folding. The GroEL-GroES system forms a nano-cage that allows encapsulation of the non-native substrate proteins and provides a physical environment optimized to promote and accelerate protein folding. GroES binds to the apical surface of the GroEL ring, thereby capping the opening of the GroEL channel. This is Co-chaperonin GroES from Caulobacter vibrioides (strain ATCC 19089 / CIP 103742 / CB 15) (Caulobacter crescentus).